The primary structure comprises 404 residues: Queuine tRNA-ribosyltransferase catalytic subunit (404 aa).

The Proton acceptor role is filled by D98. Residues 98 to 102 (DSGGF), D152, Q195, and G222 contribute to the substrate site. The RNA binding stretch occupies residues 253-259 (GVGYAED). The Nucleophile role is filled by D272. The segment at 277 to 281 (TRTAR) is RNA binding; important for wobble base 34 recognition. 4 residues coordinate Zn(2+): C310, C312, C315, and H347.

The protein belongs to the queuine tRNA-ribosyltransferase family. In terms of assembly, heterodimer of a catalytic subunit and an accessory subunit. The cofactor is Zn(2+).

The protein localises to the cytoplasm. The protein resides in the nucleus. It catalyses the reaction guanosine(34) in tRNA + queuine = queuosine(34) in tRNA + guanine. Functionally, catalytic subunit of the queuine tRNA-ribosyltransferase (TGT) that catalyzes the base-exchange of a guanine (G) residue with queuine (Q) at position 34 (anticodon wobble position) in tRNAs with GU(N) anticodons (tRNA-Asp, -Asn, -His and -Tyr), resulting in the hypermodified nucleoside queuosine (7-(((4,5-cis-dihydroxy-2-cyclopenten-1-yl)amino)methyl)-7-deazaguanosine). Catalysis occurs through a double-displacement mechanism. The nucleophile active site attacks the C1' of nucleotide 34 to detach the guanine base from the RNA, forming a covalent enzyme-RNA intermediate. The proton acceptor active site deprotonates the incoming queuine, allowing a nucleophilic attack on the C1' of the ribose to form the product. The chain is Queuine tRNA-ribosyltransferase catalytic subunit from Schizosaccharomyces pombe (strain 972 / ATCC 24843) (Fission yeast).